A 263-amino-acid chain; its full sequence is Chymotrypsinogen B (263 aa).

Positions 1–18 (MAFLWLVSCFALVGATFG) are cleaved as a signal peptide. Disulfide bonds link C19–C140, C60–C76, C154–C219, C186–C200, and C209–C238. The 228-residue stretch at 34 to 261 (IVNGEDAIPG…LMPWVQQILE (228 aa)) folds into the Peptidase S1 domain. The active-site Charge relay system is the H75. The residue at position 93 (S93) is a Phosphoserine. The active-site Charge relay system is the D120. S213 serves as the catalytic Charge relay system.

Belongs to the peptidase S1 family.

The protein resides in the secreted. The protein localises to the extracellular space. It catalyses the reaction Preferential cleavage: Tyr-|-Xaa, Trp-|-Xaa, Phe-|-Xaa, Leu-|-Xaa.. The polypeptide is Chymotrypsinogen B (Ctrb1) (Rattus norvegicus (Rat)).